A 318-amino-acid polypeptide reads, in one-letter code: tRNA pseudouridine synthase B (318 aa).

Aspartate 47 serves as the catalytic Nucleophile.

It belongs to the pseudouridine synthase TruB family. Type 1 subfamily.

The catalysed reaction is uridine(55) in tRNA = pseudouridine(55) in tRNA. Functionally, responsible for synthesis of pseudouridine from uracil-55 in the psi GC loop of transfer RNAs. The sequence is that of tRNA pseudouridine synthase B from Aliivibrio salmonicida (strain LFI1238) (Vibrio salmonicida (strain LFI1238)).